The sequence spans 320 residues: Methionyl-tRNA formyltransferase (320 aa).

Position 111–114 (111–114) interacts with (6S)-5,6,7,8-tetrahydrofolate; sequence SLLP.

This sequence belongs to the Fmt family.

The enzyme catalyses L-methionyl-tRNA(fMet) + (6R)-10-formyltetrahydrofolate = N-formyl-L-methionyl-tRNA(fMet) + (6S)-5,6,7,8-tetrahydrofolate + H(+). Its function is as follows. Attaches a formyl group to the free amino group of methionyl-tRNA(fMet). The formyl group appears to play a dual role in the initiator identity of N-formylmethionyl-tRNA by promoting its recognition by IF2 and preventing the misappropriation of this tRNA by the elongation apparatus. The protein is Methionyl-tRNA formyltransferase of Bifidobacterium adolescentis (strain ATCC 15703 / DSM 20083 / NCTC 11814 / E194a).